Consider the following 845-residue polypeptide: Beta-mannosidase B (845 aa).

An N-linked (GlcNAc...) asparagine glycan is attached at N252. E432 (proton donor) is an active-site residue. 2 N-linked (GlcNAc...) asparagine glycosylation sites follow: N717 and N723.

The protein belongs to the glycosyl hydrolase 2 family. Beta-mannosidase B subfamily.

It carries out the reaction Hydrolysis of terminal, non-reducing beta-D-mannose residues in beta-D-mannosides.. It participates in glycan metabolism; N-glycan degradation. Exoglycosidase that cleaves the single beta-linked mannose residue from the non-reducing end of beta-mannosidic oligosaccharides of various complexity and length. Prefers mannobiose over mannotriose and has no activity against polymeric mannan. Is also severely restricted by galactosyl substitutions at the +1 subsite. The sequence is that of Beta-mannosidase B (mndB) from Aspergillus fumigatus (strain ATCC MYA-4609 / CBS 101355 / FGSC A1100 / Af293) (Neosartorya fumigata).